The sequence spans 126 residues: MAFSGTWQVYAQENYEEFLKALALPEDLIKMARDIKPIVEIQQKGDDFVVTSKTPRQTVTNSFTLGKEADITTMDGKKLKCTVHLANGKLVTKSEKFSHEQEVKGNEMVETITFGGVTLIRRSKRV.

At alanine 2 the chain carries N-acetylalanine. Positions 56, 57, 77, 99, and 101 each coordinate cholate.

It belongs to the calycin superfamily. Fatty-acid binding protein (FABP) family.

It localises to the cytoplasm. In terms of biological role, binds free fatty acids and their coenzyme A derivatives, bilirubin, and some other small molecules in the cytoplasm. May be involved in intracellular lipid transport. Binds 2 molecules of cholate per subunit. The protein is Fatty acid-binding protein, liver (FABP1) of Gallus gallus (Chicken).